Here is a 90-residue protein sequence, read N- to C-terminus: Envelope glycoprotein N (90 aa).

An N-terminal signal peptide occupies residues 1–21 (MTWKLFICFLSFGVIFLRVSS). At 22–55 (LTEKSHTTSYTILHNNNFYSNSCSADTYVPSIKT) the chain is on the virion surface side. A helical transmembrane segment spans residues 56–76 (FSSVWAILNVIIFFCASLFYL). The Intravirion portion of the chain corresponds to 77 to 90 (RHLCIVKFISNLTK).

This sequence belongs to the herpesviridae glycoprotein N family. In terms of assembly, interacts (via N-terminus) with gM (via N-terminus). The gM-gN heterodimer forms the gCII complex.

The protein resides in the virion membrane. It is found in the host membrane. It localises to the host Golgi apparatus. Its subcellular location is the host trans-Golgi network. Envelope glycoprotein necessary for proper maturation of gM and modulation of its membrane fusion activity. Also plays a critical role in virion morphogenesis. The polypeptide is Envelope glycoprotein N (Saimiriine herpesvirus 2 (strain 11) (SaHV-2)).